Reading from the N-terminus, the 311-residue chain is 4-diphosphocytidyl-2-C-methyl-D-erythritol kinase (311 aa).

Lysine 16 is a catalytic residue. 101–111 (PVAGGMAGGSA) serves as a coordination point for ATP. Aspartate 143 is a catalytic residue.

Belongs to the GHMP kinase family. IspE subfamily.

It catalyses the reaction 4-CDP-2-C-methyl-D-erythritol + ATP = 4-CDP-2-C-methyl-D-erythritol 2-phosphate + ADP + H(+). The protein operates within isoprenoid biosynthesis; isopentenyl diphosphate biosynthesis via DXP pathway; isopentenyl diphosphate from 1-deoxy-D-xylulose 5-phosphate: step 3/6. In terms of biological role, catalyzes the phosphorylation of the position 2 hydroxy group of 4-diphosphocytidyl-2C-methyl-D-erythritol. This is 4-diphosphocytidyl-2-C-methyl-D-erythritol kinase from Rhodococcus jostii (strain RHA1).